A 330-amino-acid polypeptide reads, in one-letter code: Olfactory receptor 1P1 (330 aa).

The Extracellular portion of the chain corresponds to 1 to 39 (MGLTQDFFPPTSELLEGGNQTSTFEFLLWGLSDQPQQQH). N-linked (GlcNAc...) asparagine glycosylation occurs at Asn19. Residues 40 to 60 (IFFLLFLWMYVVTVAGNLLIV) traverse the membrane as a helical segment. At 61-71 (LAIGTDTHLHT) the chain is on the cytoplasmic side. Residues 72 to 92 (PMYFFLASLSCADIFSTSTTV) form a helical membrane-spanning segment. The Extracellular segment spans residues 93 to 111 (PKALVNIQTQSRSISYAGC). A disulfide bridge connects residues Cys111 and Cys192. A helical transmembrane segment spans residues 112–132 (LAQLYFFLTFGDMDIFLPATM). At 133 to 137 (AYDRY) the chain is on the cytoplasmic side. A helical membrane pass occupies residues 138–158 (VAICHLLHYMMIMSLHRCAFL). Topologically, residues 159–209 (VTACWTLTSLLAMTRTFLIFRLSLCSKILPGFFCDLGPLMKVSCSDAQVNE) are extracellular. Residues 210–230 (LVLLFLGGAVILIPFMLILVS) traverse the membrane as a helical segment. Residues 231–257 (YIRIVSAILRAPSAQGRRKAFSTCDSH) lie on the Cytoplasmic side of the membrane. Residues 258–278 (LVVVALFFGTVIRAYLCPSSS) traverse the membrane as a helical segment. The Extracellular segment spans residues 279–286 (SSNSVKED). A helical transmembrane segment spans residues 287 to 307 (TAAAVMYTVVTPLLNPFIYSM). The Cytoplasmic portion of the chain corresponds to 308–330 (RNKDMKAAVVRLLKGRVSFSQGQ).

Belongs to the G-protein coupled receptor 1 family.

It localises to the cell membrane. Odorant receptor. This chain is Olfactory receptor 1P1 (OR1P1), found in Homo sapiens (Human).